Consider the following 597-residue polypeptide: Aspartate--tRNA(Asp/Asn) ligase (597 aa).

Glu170 lines the L-aspartate pocket. Positions 194–197 (QLFK) are aspartate. Arg216 is an L-aspartate binding site. Residues 216 to 218 (RDE) and Gln225 each bind ATP. An L-aspartate-binding site is contributed by His448. Residue Glu482 coordinates ATP. Residue Arg489 coordinates L-aspartate. Position 534 to 537 (534 to 537 (GWDR)) interacts with ATP. The disordered stretch occupies residues 558 to 597 (GGGVDPLTDAPAPITAAQRKESGIDAKPEKAEKAGKPADA). The segment covering 575–597 (QRKESGIDAKPEKAEKAGKPADA) has biased composition (basic and acidic residues).

It belongs to the class-II aminoacyl-tRNA synthetase family. Type 1 subfamily. Homodimer.

Its subcellular location is the cytoplasm. It catalyses the reaction tRNA(Asx) + L-aspartate + ATP = L-aspartyl-tRNA(Asx) + AMP + diphosphate. Aspartyl-tRNA synthetase with relaxed tRNA specificity since it is able to aspartylate not only its cognate tRNA(Asp) but also tRNA(Asn). Reaction proceeds in two steps: L-aspartate is first activated by ATP to form Asp-AMP and then transferred to the acceptor end of tRNA(Asp/Asn). The chain is Aspartate--tRNA(Asp/Asn) ligase from Mycobacteroides abscessus (strain ATCC 19977 / DSM 44196 / CCUG 20993 / CIP 104536 / JCM 13569 / NCTC 13031 / TMC 1543 / L948) (Mycobacterium abscessus).